A 73-amino-acid chain; its full sequence is Large ribosomal subunit protein uL30 (73 aa).

It belongs to the universal ribosomal protein uL30 family. In terms of assembly, part of the 50S ribosomal subunit.

The sequence is that of Large ribosomal subunit protein uL30 from Borrelia hermsii (strain HS1 / DAH).